A 352-amino-acid polypeptide reads, in one-letter code: N-acetyl-gamma-glutamyl-phosphate reductase (352 aa).

Cysteine 149 is an active-site residue.

Belongs to the NAGSA dehydrogenase family. Type 1 subfamily.

It is found in the cytoplasm. It carries out the reaction N-acetyl-L-glutamate 5-semialdehyde + phosphate + NADP(+) = N-acetyl-L-glutamyl 5-phosphate + NADPH + H(+). It functions in the pathway amino-acid biosynthesis; L-arginine biosynthesis; N(2)-acetyl-L-ornithine from L-glutamate: step 3/4. Functionally, catalyzes the NADPH-dependent reduction of N-acetyl-5-glutamyl phosphate to yield N-acetyl-L-glutamate 5-semialdehyde. This is N-acetyl-gamma-glutamyl-phosphate reductase from Polynucleobacter asymbioticus (strain DSM 18221 / CIP 109841 / QLW-P1DMWA-1) (Polynucleobacter necessarius subsp. asymbioticus).